The following is a 219-amino-acid chain: Flagellin B4 (219 aa).

Residues 1–5 constitute a propeptide that is removed on maturation; sequence MHRKG.

Belongs to the archaeal flagellin family.

The protein localises to the archaeal flagellum. In terms of biological role, flagellin is the subunit protein which polymerizes to form the filaments of archaeal flagella. In Pyrococcus abyssi (strain GE5 / Orsay), this protein is Flagellin B4 (flaB4).